Consider the following 782-residue polypeptide: Nezukol synthase KSL3 (782 aa).

Mg(2+)-binding residues include Asp529, Asp533, Asn677, and Glu685. A DDXXD motif motif is present at residues 529-533; sequence DDVFD.

This sequence belongs to the terpene synthase family. Requires Mg(2+) as cofactor. Highly expressed in leaves, and, at low levels, in stems, but barely in roots and flowers.

The catalysed reaction is (+)-copalyl diphosphate = miltiradiene + diphosphate. It catalyses the reaction (+)-copalyl diphosphate + H2O = nezukol + diphosphate. It functions in the pathway secondary metabolite biosynthesis; terpenoid biosynthesis. Functionally, involved in the biosynthesis of ent-kaurene diterpenoids natural products such as oridonin, miltiradiene, eriocalyxin B and nezukol, known to exhibit antitumor, anti-inflammatory and antibacterial activities. Catalyzes the conversion of (+)-copalyl diphosphate ((+)-CPP) to nezukol and miltiradiene. The reaction mechanism proceeds via the ionization of the diphosphate group of (+)-CPP, followed by formation of an intermediary pimar-15-en-8-yl(+) carbocation and neutralization of the carbocation by water capture at C-8 to yield nezukol. Can interact with ent-copalyl diphosphate (ent-CPP) but seems unable to use it as substrate. In Isodon rubescens (Rabdosia rubescens), this protein is Nezukol synthase KSL3.